Here is a 1362-residue protein sequence, read N- to C-terminus: Mediator of RNA polymerase II transcription subunit 12 (1362 aa).

The interval 31–51 is disordered; it reads LRPPDDIHPLVDPARIGDSVY.

It belongs to the Mediator complex subunit 12 family. Component of the SRB8-11 complex, which itself associates with the Mediator complex.

Its subcellular location is the nucleus. Functionally, component of the SRB8-11 complex. The SRB8-11 complex is a regulatory module of the Mediator complex which is itself involved in regulation of basal and activated RNA polymerase II-dependent transcription. The SRB8-11 complex may be involved in the transcriptional repression of a subset of genes regulated by Mediator. It may inhibit the association of the Mediator complex with RNA polymerase II to form the holoenzyme complex. This Yarrowia lipolytica (strain CLIB 122 / E 150) (Yeast) protein is Mediator of RNA polymerase II transcription subunit 12 (SRB8).